Reading from the N-terminus, the 599-residue chain is DNA primase (599 aa).

The segment at 38–62 adopts a CHC2-type zinc-finger fold; sequence CPFHDEKTPSFTVSEDKQICHCFGC. The Toprim domain occupies 260-341; the sequence is DEIVLLEGFM…NVFVIQLPSG (82 aa). Positions 266, 310, and 312 each coordinate Mg(2+).

This sequence belongs to the DnaG primase family. In terms of assembly, monomer. Interacts with DnaB. Zn(2+) serves as cofactor. Requires Mg(2+) as cofactor.

It carries out the reaction ssDNA + n NTP = ssDNA/pppN(pN)n-1 hybrid + (n-1) diphosphate.. Its function is as follows. RNA polymerase that catalyzes the synthesis of short RNA molecules used as primers for DNA polymerase during DNA replication. This Staphylococcus aureus (strain MRSA252) protein is DNA primase.